Consider the following 228-residue polypeptide: 7-cyano-7-deazaguanine synthase (228 aa).

Tyr9–Met19 serves as a coordination point for ATP. Positions 189, 199, 202, and 205 each coordinate Zn(2+).

Belongs to the QueC family. It depends on Zn(2+) as a cofactor.

The catalysed reaction is 7-carboxy-7-deazaguanine + NH4(+) + ATP = 7-cyano-7-deazaguanine + ADP + phosphate + H2O + H(+). It participates in purine metabolism; 7-cyano-7-deazaguanine biosynthesis. Functionally, catalyzes the ATP-dependent conversion of 7-carboxy-7-deazaguanine (CDG) to 7-cyano-7-deazaguanine (preQ(0)). The polypeptide is 7-cyano-7-deazaguanine synthase (Geotalea uraniireducens (strain Rf4) (Geobacter uraniireducens)).